Consider the following 274-residue polypeptide: Centriolar and ciliogenesis-associated protein hyls-1 (274 aa).

Disordered regions lie at residues Arg156–Pro188 and Asn255–Asp274. Positions Val171–Gln183 are enriched in polar residues. Residues Glu257–Asp274 are compositionally biased toward basic and acidic residues.

This sequence belongs to the HYLS1 family. As to quaternary structure, interacts with sas-4; leading to its localization into newly forming centrioles.

It is found in the cytoplasm. The protein localises to the cytoskeleton. It localises to the microtubule organizing center. Its subcellular location is the centrosome. The protein resides in the centriole. It is found in the cell projection. The protein localises to the cilium. In terms of biological role, plays an important role in ciliogenesis. The sequence is that of Centriolar and ciliogenesis-associated protein hyls-1 from Caenorhabditis elegans.